The sequence spans 87 residues: MKTKLREMLKFPCFFTYKIIGLAQPELVDQIIKVIQIQIPGDYTPQVKSSNRGNYLSVSITICAKNFEQIETLYHDISKINMVRMVL.

Belongs to the UPF0250 family.

This chain is UPF0250 protein BUsg_472, found in Buchnera aphidicola subsp. Schizaphis graminum (strain Sg).